The following is a 180-amino-acid chain: Large ribosomal subunit protein uL6 (180 aa).

It belongs to the universal ribosomal protein uL6 family. In terms of assembly, part of the 50S ribosomal subunit.

Its function is as follows. This protein binds to the 23S rRNA, and is important in its secondary structure. It is located near the subunit interface in the base of the L7/L12 stalk, and near the tRNA binding site of the peptidyltransferase center. The sequence is that of Large ribosomal subunit protein uL6 from Clostridium botulinum (strain Langeland / NCTC 10281 / Type F).